The primary structure comprises 37 residues: Large ribosomal subunit protein bL36c (37 aa).

It belongs to the bacterial ribosomal protein bL36 family.

It localises to the plastid. The protein localises to the chloroplast. The chain is Large ribosomal subunit protein bL36c from Jasminum nudiflorum (Winter jasmine).